A 307-amino-acid chain; its full sequence is 4-hydroxy-tetrahydrodipicolinate synthase (307 aa).

S57 lines the pyruvate pocket. Y145 serves as the catalytic Proton donor/acceptor. K173 acts as the Schiff-base intermediate with substrate in catalysis. I219 contributes to the pyruvate binding site.

It belongs to the DapA family. Homotetramer; dimer of dimers.

It localises to the cytoplasm. It carries out the reaction L-aspartate 4-semialdehyde + pyruvate = (2S,4S)-4-hydroxy-2,3,4,5-tetrahydrodipicolinate + H2O + H(+). It functions in the pathway amino-acid biosynthesis; L-lysine biosynthesis via DAP pathway; (S)-tetrahydrodipicolinate from L-aspartate: step 3/4. In terms of biological role, catalyzes the condensation of (S)-aspartate-beta-semialdehyde [(S)-ASA] and pyruvate to 4-hydroxy-tetrahydrodipicolinate (HTPA). The protein is 4-hydroxy-tetrahydrodipicolinate synthase of Polynucleobacter asymbioticus (strain DSM 18221 / CIP 109841 / QLW-P1DMWA-1) (Polynucleobacter necessarius subsp. asymbioticus).